Consider the following 318-residue polypeptide: Homoserine kinase (318 aa).

97–107 (PIGSGLGSSAC) is a binding site for ATP.

It belongs to the GHMP kinase family. Homoserine kinase subfamily.

The protein localises to the cytoplasm. It carries out the reaction L-homoserine + ATP = O-phospho-L-homoserine + ADP + H(+). It participates in amino-acid biosynthesis; L-threonine biosynthesis; L-threonine from L-aspartate: step 4/5. Catalyzes the ATP-dependent phosphorylation of L-homoserine to L-homoserine phosphate. The chain is Homoserine kinase from Aliivibrio fischeri (strain ATCC 700601 / ES114) (Vibrio fischeri).